We begin with the raw amino-acid sequence, 401 residues long: Bifunctional enzyme IspD/IspF (401 aa).

The tract at residues 1–234 (MQKPPRTAAI…SRLTAALGDI (234 aa)) is 2-C-methyl-D-erythritol 4-phosphate cytidylyltransferase. Residues 235–401 (RTGTGYDVHA…SPWGAEGQAS (167 aa)) are 2-C-methyl-D-erythritol 2,4-cyclodiphosphate synthase. A divalent metal cation is bound by residues D241 and H243. 4-CDP-2-C-methyl-D-erythritol 2-phosphate contacts are provided by residues 241-243 (DVH) and 267-268 (HS). H275 contributes to the a divalent metal cation binding site. 4-CDP-2-C-methyl-D-erythritol 2-phosphate is bound by residues 289 to 291 (DIG), 365 to 368 (TTSE), F372, and R375.

In the N-terminal section; belongs to the IspD/TarI cytidylyltransferase family. IspD subfamily. It in the C-terminal section; belongs to the IspF family. Requires a divalent metal cation as cofactor.

The enzyme catalyses 2-C-methyl-D-erythritol 4-phosphate + CTP + H(+) = 4-CDP-2-C-methyl-D-erythritol + diphosphate. It carries out the reaction 4-CDP-2-C-methyl-D-erythritol 2-phosphate = 2-C-methyl-D-erythritol 2,4-cyclic diphosphate + CMP. It functions in the pathway isoprenoid biosynthesis; isopentenyl diphosphate biosynthesis via DXP pathway; isopentenyl diphosphate from 1-deoxy-D-xylulose 5-phosphate: step 2/6. The protein operates within isoprenoid biosynthesis; isopentenyl diphosphate biosynthesis via DXP pathway; isopentenyl diphosphate from 1-deoxy-D-xylulose 5-phosphate: step 4/6. Its function is as follows. Bifunctional enzyme that catalyzes the formation of 4-diphosphocytidyl-2-C-methyl-D-erythritol from CTP and 2-C-methyl-D-erythritol 4-phosphate (MEP) (IspD), and catalyzes the conversion of 4-diphosphocytidyl-2-C-methyl-D-erythritol 2-phosphate (CDP-ME2P) to 2-C-methyl-D-erythritol 2,4-cyclodiphosphate (ME-CPP) with a corresponding release of cytidine 5-monophosphate (CMP) (IspF). In Rhodopseudomonas palustris (strain HaA2), this protein is Bifunctional enzyme IspD/IspF.